Consider the following 309-residue polypeptide: Ribosomal RNA small subunit methyltransferase H (309 aa).

S-adenosyl-L-methionine-binding positions include 33 to 35 (GGH), Asp-53, Phe-79, Asp-100, and Gln-107.

Belongs to the methyltransferase superfamily. RsmH family.

It is found in the cytoplasm. It carries out the reaction cytidine(1402) in 16S rRNA + S-adenosyl-L-methionine = N(4)-methylcytidine(1402) in 16S rRNA + S-adenosyl-L-homocysteine + H(+). Its function is as follows. Specifically methylates the N4 position of cytidine in position 1402 (C1402) of 16S rRNA. The chain is Ribosomal RNA small subunit methyltransferase H from Clostridium botulinum (strain 657 / Type Ba4).